We begin with the raw amino-acid sequence, 255 residues long: Phosphatidylcholine synthase (255 aa).

Residues 1–13 (MNPIKPPFTLNQY) lie on the Cytoplasmic side of the membrane. A helical transmembrane segment spans residues 14–34 (FAAWFVHVFTASAACIGVFSL). The Periplasmic segment spans residues 35–42 (YKIYQHDY). A helical transmembrane segment spans residues 43–63 (VFALWLMAITVFIDAVDGSLA). The Cytoplasmic segment spans residues 64 to 76 (RLVHVKSVLPKID). A helical transmembrane segment spans residues 77-97 (GALLDNIVDYLNYVITPCFFL). Residues 98–103 (LVKPGM) are Periplasmic-facing. Residues 104-124 (LPADYVVPITAAITITSAYQF) traverse the membrane as a helical segment. The Cytoplasmic segment spans residues 125–133 (CQDDAKTPD). Residues 134-154 (HFFKGFPCYWNITVFYMYIFN) traverse the membrane as a helical segment. A topological domain (periplasmic) is located at residue Thr155. A helical membrane pass occupies residues 156–175 (SMIVNTVLLSLFCVLIFIPV). Residues 176–190 (KYVYPSRLDYLTESR) lie on the Cytoplasmic side of the membrane. Residues 191–211 (VLKILMHCCSALYGISSFCLL) form a helical membrane-spanning segment. The Periplasmic portion of the chain corresponds to 212-217 (VNYPET). Residues 218–238 (NKLWVSLSLGYVGMYLFLSFY) form a helical membrane-spanning segment. The Cytoplasmic segment spans residues 239–255 (RTYYPMFKAKITANNKD).

The protein belongs to the CDP-alcohol phosphatidyltransferase class-I family. It depends on Mn(2+) as a cofactor.

Its subcellular location is the cell inner membrane. The catalysed reaction is a CDP-1,2-diacyl-sn-glycerol + choline = a 1,2-diacyl-sn-glycero-3-phosphocholine + CMP + H(+). Its function is as follows. Condenses choline with CDP-diglyceride to produce phosphatidylcholine and CMP. Affects virulence of this bacterium when there is a complete loss of phosphatidylcholine formation due to absence of both the synthase (pcs) and the methylation (pmtA) pathways. Reduced virulence results from lowered yields of bacteria within host macrophages and because of loss of high multiplicity cytotoxicity. In Legionella pneumophila subsp. pneumophila (strain Philadelphia 1 / ATCC 33152 / DSM 7513), this protein is Phosphatidylcholine synthase.